The primary structure comprises 246 residues: Protein 3F (246 aa).

Residues 1–19 (MKLLSKLILTLALATYASA) form the signal peptide. The N-linked (GlcNAc...) asparagine glycan is linked to Asn52. The segment covering 113 to 124 (EVRPIDRLKDNA) has biased composition (basic and acidic residues). The segment at 113-223 (EVRPIDRLKD…EEAEHVEKGA (111 aa)) is disordered. The segment covering 126-145 (AANTENAQKSPNTQSTQKGS) has biased composition (polar residues). Repeat copies occupy residues 145–153 (SPKSDAKEA), 154–162 (SPKTDAKEA), and 163–171 (SPKSDAKEA). The segment at 145–176 (SPKSDAKEASPKTDAKEASPKSDAKEASPKTD) is 3.5 X 9 AA tandem repeats of S-P-K-[ST]-D-A-K-E-A. The span at 146–177 (PKSDAKEASPKTDAKEASPKSDAKEASPKTDT) shows a compositional bias: basic and acidic residues. A 4; truncated repeat occupies 172-176 (SPKTD). The span at 181–213 (SSPKTDTKSSTQKPSSSSDSSKAKAEANTAANN) shows a compositional bias: low complexity.

The polypeptide is Protein 3F (pspG) (Dictyostelium discoideum (Social amoeba)).